The primary structure comprises 240 residues: Type II restriction enzyme DdeI (240 aa).

It carries out the reaction Endonucleolytic cleavage of DNA to give specific double-stranded fragments with terminal 5'-phosphates.. A P subtype restriction enzyme that recognizes the double-stranded sequence 5'-CTNAG-3' and cleaves after C-1. This is Type II restriction enzyme DdeI (ddeIR) from Desulfomicrobium norvegicum (strain DSM 1741 / NCIMB 8310) (Desulfovibrio baculatus (strain Norway 4)).